The sequence spans 267 residues: MLKYLVALISMVLAVWTVPEWLTFPIYGNVVTVLESWLRQRVSEVSASSPGLLLTKEQLSLYNGGKNSKGLYLAILGQVFDVEKGRKHYGPGGGYHFFTGKDASRAFITGDFTEAGLSNDVSDFSESQIVALYDWLSFYQRDYTPVGKLIGRFYTETGQPTDALLHVEAFLSDGLKKKAQAQSEMQLYPSCNSEWSEASGGRVWCSTMSGGIHRDWVGVPRMLFTPGSGHSRCVCIRLSDPVHSENRNLREYTDCPPRAESCQIAKD.

An N-terminal signal peptide occupies residues 1–17 (MLKYLVALISMVLAVWT). The Cytochrome b5 heme-binding domain maps to 53 to 150 (LLTKEQLSLY…RDYTPVGKLI (98 aa)).

Belongs to the cytochrome b5 family. MAPR subfamily.

It localises to the secreted. Its function is as follows. Heme-binding protein which promotes neuronal but not astrocyte differentiation. This is Neuferricin (cyb5d2) from Danio rerio (Zebrafish).